The chain runs to 154 residues: GTP-dependent dephospho-CoA kinase (154 aa).

D34, D53, and E107 together coordinate GTP.

This sequence belongs to the GTP-dependent DPCK family.

It catalyses the reaction 3'-dephospho-CoA + GTP = GDP + CoA + H(+). The protein operates within cofactor biosynthesis; coenzyme A biosynthesis. In terms of biological role, catalyzes the GTP-dependent phosphorylation of the 3'-hydroxyl group of dephosphocoenzyme A to form coenzyme A (CoA). The sequence is that of GTP-dependent dephospho-CoA kinase from Nitrosopumilus maritimus (strain SCM1).